A 670-amino-acid polypeptide reads, in one-letter code: Sodium, potassium, lithium and rubidium/H(+) antiporter (670 aa).

11 consecutive transmembrane segments (helical) span residues 5-27, 46-66, 83-103, 105-125, 156-176, 182-202, 228-248, 276-296, 314-334, 355-375, and 389-409; these read LVVLVLLTIIAISNIVNRFIPFI, GLHFELNTELFFVLFIAPLLF, PILLLALGLVFATVIVGGYTI, WMIPAIPLAAAFGLAAILSPT, ASGLVAFKFAIAAAVTGAFSL, SFVFISLGGLLCGVVISFLII, FVIYLAAEEIGVSGILAVVAG, IILFILNGLVFVILGTQIPDV, YILVITFTLMLLRFLWVLFFW, LLISISGVRGAVTLAGSFSIP, and LILFLAAGVILCTLVIATVVL.

The protein belongs to the monovalent cation:proton antiporter 1 (CPA1) transporter (TC 2.A.36) family. Nhak (TC 2.A.36.3.2) subfamily.

The protein resides in the cell membrane. Its function is as follows. Transporter involved in the efflux of sodium, potassium, lithium and rubidium. This Bacillus subtilis (strain 168) protein is Sodium, potassium, lithium and rubidium/H(+) antiporter (nhaK).